Reading from the N-terminus, the 394-residue chain is Elongation factor Tu 2 (394 aa).

The 195-residue stretch at Lys-10–Glu-204 folds into the tr-type G domain. The segment at Gly-19–Thr-26 is G1. Gly-19–Thr-26 lines the GTP pocket. Residue Thr-26 participates in Mg(2+) binding. A G2 region spans residues Gly-60–Asn-64. The interval Asp-81 to Gly-84 is G3. Residues Asp-81–His-85 and Asn-136–Asp-139 contribute to the GTP site. A G4 region spans residues Asn-136–Asp-139. A G5 region spans residues Ser-174–Leu-176.

The protein belongs to the TRAFAC class translation factor GTPase superfamily. Classic translation factor GTPase family. EF-Tu/EF-1A subfamily. Monomer.

Its subcellular location is the cytoplasm. The enzyme catalyses GTP + H2O = GDP + phosphate + H(+). Functionally, GTP hydrolase that promotes the GTP-dependent binding of aminoacyl-tRNA to the A-site of ribosomes during protein biosynthesis. The polypeptide is Elongation factor Tu 2 (Haemophilus influenzae (strain 86-028NP)).